A 168-amino-acid chain; its full sequence is uncharacterized protein (168 aa).

2 consecutive transmembrane segments (helical) span residues 27-47 (NWLV…RISG) and 147-167 (IENG…QVMF).

Its subcellular location is the membrane. This is an uncharacterized protein from Saccharomyces cerevisiae (strain ATCC 204508 / S288c) (Baker's yeast).